Reading from the N-terminus, the 157-residue chain is Transcriptional repressor NrdR (157 aa).

Residues 3–34 (CPFCNAEDTKVIDSRLVEEGTQVRRRRECLKC) fold into a zinc finger. The region spanning 49 to 139 (PRIIKRDGRR…VYRSFQDINA (91 aa)) is the ATP-cone domain.

Belongs to the NrdR family. Zn(2+) serves as cofactor.

In terms of biological role, negatively regulates transcription of bacterial ribonucleotide reductase nrd genes and operons by binding to NrdR-boxes. The protein is Transcriptional repressor NrdR of Coxiella burnetii (strain CbuK_Q154) (Coxiella burnetii (strain Q154)).